We begin with the raw amino-acid sequence, 134 residues long: Holo-[acyl-carrier-protein] synthase (134 aa).

Residues Asp8 and Glu57 each coordinate Mg(2+).

This sequence belongs to the P-Pant transferase superfamily. AcpS family. Mg(2+) serves as cofactor.

It is found in the cytoplasm. The enzyme catalyses apo-[ACP] + CoA = holo-[ACP] + adenosine 3',5'-bisphosphate + H(+). Its function is as follows. Transfers the 4'-phosphopantetheine moiety from coenzyme A to a Ser of acyl-carrier-protein. This Brucella abortus (strain S19) protein is Holo-[acyl-carrier-protein] synthase.